Here is a 133-residue protein sequence, read N- to C-terminus: MAANDTISDMLTRIRNSCMAQHTTTKVPATKMTRSIAKVLKDEGFIGEFEQEGEGIKKYLVIFLKYKGKNRQPIIRYLKRVSKPGLRVYKNRKELPRVLGGIGIAIISTSSGIMTDREARKRGIGGEVLCYVW.

It belongs to the universal ribosomal protein uS8 family. In terms of assembly, part of the 30S ribosomal subunit. Contacts proteins S5 and S12.

In terms of biological role, one of the primary rRNA binding proteins, it binds directly to 16S rRNA central domain where it helps coordinate assembly of the platform of the 30S subunit. The sequence is that of Small ribosomal subunit protein uS8 from Trichodesmium erythraeum (strain IMS101).